Here is a 317-residue protein sequence, read N- to C-terminus: Aspartate carbamoyltransferase catalytic subunit (317 aa).

Carbamoyl phosphate is bound by residues R65 and T66. K93 contacts L-aspartate. Carbamoyl phosphate-binding residues include R115, H145, and Q148. Residues R178 and R233 each coordinate L-aspartate. Carbamoyl phosphate-binding residues include G274 and P275.

This sequence belongs to the aspartate/ornithine carbamoyltransferase superfamily. ATCase family. As to quaternary structure, heterododecamer (2C3:3R2) of six catalytic PyrB chains organized as two trimers (C3), and six regulatory PyrI chains organized as three dimers (R2).

It catalyses the reaction carbamoyl phosphate + L-aspartate = N-carbamoyl-L-aspartate + phosphate + H(+). Its pathway is pyrimidine metabolism; UMP biosynthesis via de novo pathway; (S)-dihydroorotate from bicarbonate: step 2/3. Its function is as follows. Catalyzes the condensation of carbamoyl phosphate and aspartate to form carbamoyl aspartate and inorganic phosphate, the committed step in the de novo pyrimidine nucleotide biosynthesis pathway. The protein is Aspartate carbamoyltransferase catalytic subunit of Methylobacillus flagellatus (strain ATCC 51484 / DSM 6875 / VKM B-1610 / KT).